The primary structure comprises 140 residues: Calcium-binding protein B (140 aa).

2 EF-hand domains span residues 38 to 73 and 74 to 109; these read ATLSKYKTQFMSYDINNSGDIDHYELQLLMEKINQP and KTYLELKKMIEQVDSTGKGAINFRDFIKMMTGKTSS. Asp51, Asn53, Ser55, Asp57, and Glu62 together coordinate Ca(2+).

This is Calcium-binding protein B (cbpB) from Dictyostelium discoideum (Social amoeba).